The following is a 319-amino-acid chain: Type II methyltransferase M.RsrI (319 aa).

Residues 1–10 show a composition bias toward basic residues; it reads MANRSHHNAG. A disordered region spans residues 1–32; it reads MANRSHHNAGHRAMNALRKSGQKHSSESQLGS.

The protein belongs to the N(4)/N(6)-methyltransferase family.

The catalysed reaction is a 2'-deoxyadenosine in DNA + S-adenosyl-L-methionine = an N(6)-methyl-2'-deoxyadenosine in DNA + S-adenosyl-L-homocysteine + H(+). Its activity is regulated as follows. Strongly inhibited by N-ethylmaleimide, inactivated by MgCl(2) or MgSO(4). In terms of biological role, a beta subtype methylase, recognizes the double-stranded sequence 5'-GAATTC-3', methylates A-3 on both strands, and protects the DNA from cleavage by the RsrI endonuclease. The polypeptide is Type II methyltransferase M.RsrI (Cereibacter sphaeroides (Rhodobacter sphaeroides)).